We begin with the raw amino-acid sequence, 228 residues long: ATP synthase subunit a (228 aa).

Helical transmembrane passes span 14–34, 71–91, 101–121, 139–159, 165–185, and 188–208; these read YFLL…WLFF, WVPI…LGLL, ISLT…LGFY, FLLP…PIAL, ANLT…WVLM, and VAIA…EIGV.

It belongs to the ATPase A chain family. F-type ATPases have 2 components, CF(1) - the catalytic core - and CF(0) - the membrane proton channel. CF(1) has five subunits: alpha(3), beta(3), gamma(1), delta(1), epsilon(1). CF(0) has three main subunits: a, b and c.

Its subcellular location is the mitochondrion inner membrane. In terms of biological role, mitochondrial membrane ATP synthase (F(1)F(0) ATP synthase or Complex V) produces ATP from ADP in the presence of a proton gradient across the membrane which is generated by electron transport complexes of the respiratory chain. F-type ATPases consist of two structural domains, F(1) - containing the extramembraneous catalytic core and F(0) - containing the membrane proton channel, linked together by a central stalk and a peripheral stalk. During catalysis, ATP synthesis in the catalytic domain of F(1) is coupled via a rotary mechanism of the central stalk subunits to proton translocation. Key component of the proton channel; it may play a direct role in the translocation of protons across the membrane. The polypeptide is ATP synthase subunit a (ATP6) (Pisaster ochraceus (Ochre sea star)).